The chain runs to 156 residues: MILNIDFIDETNEVTKEQMNIIEQLLNYAAEIEHVPSGAEVGISFVDNERIRIINRDYRGKDQPTDVISFALEEKGEGEVEIVDADIPPLLGDIIISIPKAKEQAKEYGHSFMRELGFLAVHGFLHLLGYDHKTEEEEKIMFSKQKDILERYGLTR.

Zn(2+)-binding residues include H122, H126, and H132.

Belongs to the endoribonuclease YbeY family. Zn(2+) is required as a cofactor.

The protein resides in the cytoplasm. Its function is as follows. Single strand-specific metallo-endoribonuclease involved in late-stage 70S ribosome quality control and in maturation of the 3' terminus of the 16S rRNA. The chain is Endoribonuclease YbeY from Geobacillus sp. (strain WCH70).